We begin with the raw amino-acid sequence, 469 residues long: Glutamate--tRNA ligase (469 aa).

Residues 11 to 21 (PSPTGFIHLGN) carry the 'HIGH' region motif. Positions 114-131 (QREAGEKPRYDGTWRPEP) are enriched in basic and acidic residues. The disordered stretch occupies residues 114–139 (QREAGEKPRYDGTWRPEPGKVLPEPP). The 'KMSKS' region signature appears at 243–247 (KMSKR). K246 contacts ATP.

Belongs to the class-I aminoacyl-tRNA synthetase family. Glutamate--tRNA ligase type 1 subfamily. In terms of assembly, monomer.

The protein localises to the cytoplasm. The enzyme catalyses tRNA(Glu) + L-glutamate + ATP = L-glutamyl-tRNA(Glu) + AMP + diphosphate. Its function is as follows. Catalyzes the attachment of glutamate to tRNA(Glu) in a two-step reaction: glutamate is first activated by ATP to form Glu-AMP and then transferred to the acceptor end of tRNA(Glu). The polypeptide is Glutamate--tRNA ligase (Paraburkholderia phytofirmans (strain DSM 17436 / LMG 22146 / PsJN) (Burkholderia phytofirmans)).